A 510-amino-acid polypeptide reads, in one-letter code: MSAKKPMALVILDGYGHRETQADNAITNANTPVLDGLMANQPNTLISASGMDVGLPDGQMGNSEVGHTNIGAGRVVYQDLTRITKAISDGEFQQNETLVNAIDKAVKAGKAVHIMGLMSPGGVHSHEDHIYAAVEMAAARGAEKIYLHCFLDGRDTPPRSAENSLKNFQELFAKLGKGRIASLVGRYYAMDRDNNWERVQKAYDLMTEAKAEFTFATAVEGLEAAYAREENDEFVQATEIKAEGEESAAIVDGDAVIFMNYRADRARQITRTFVPSFDGFTRNVFPAIDFVMLTQYAADIPLLCAFAPASLENTYGEWLSKEGKTQLRISETEKYAHVTFFFNGGIEDEFEGEERQLVASPKVATYDLQPEMSAPELTEKLVAAIKSGKYDAIVCNFPNCDMVGHTGVYDATVKAVESLDECIGKVVEAIKEVDGQLLITADHGNAEMMIDPETGGVHTAHTNLPVPLIYVGSKAIEFKEGGKLSDLAPTMLALTDTAIPAEMSGEVLFK.

Mn(2+) contacts are provided by aspartate 13 and serine 63. Serine 63 (phosphoserine intermediate) is an active-site residue. Residues histidine 124, 154–155, arginine 186, arginine 192, 262–265, and lysine 334 each bind substrate; these read RD and RADR. Residues aspartate 401, histidine 405, aspartate 442, histidine 443, and histidine 461 each coordinate Mn(2+).

It belongs to the BPG-independent phosphoglycerate mutase family. As to quaternary structure, monomer. Requires Mn(2+) as cofactor.

The enzyme catalyses (2R)-2-phosphoglycerate = (2R)-3-phosphoglycerate. It functions in the pathway carbohydrate degradation; glycolysis; pyruvate from D-glyceraldehyde 3-phosphate: step 3/5. Its function is as follows. Catalyzes the interconversion of 2-phosphoglycerate and 3-phosphoglycerate. The chain is 2,3-bisphosphoglycerate-independent phosphoglycerate mutase from Aliivibrio fischeri (strain MJ11) (Vibrio fischeri).